A 252-amino-acid chain; its full sequence is 3-dehydroquinate dehydratase (252 aa).

3-dehydroquinate contacts are provided by residues serine 21, 46-48 (EWR), and arginine 82. The Proton donor/acceptor role is filled by histidine 143. Lysine 170 acts as the Schiff-base intermediate with substrate in catalysis. Positions 213, 232, and 236 each coordinate 3-dehydroquinate.

It belongs to the type-I 3-dehydroquinase family. Homodimer.

The enzyme catalyses 3-dehydroquinate = 3-dehydroshikimate + H2O. It participates in metabolic intermediate biosynthesis; chorismate biosynthesis; chorismate from D-erythrose 4-phosphate and phosphoenolpyruvate: step 3/7. Functionally, involved in the third step of the chorismate pathway, which leads to the biosynthesis of aromatic amino acids. Catalyzes the cis-dehydration of 3-dehydroquinate (DHQ) and introduces the first double bond of the aromatic ring to yield 3-dehydroshikimate. The protein is 3-dehydroquinate dehydratase of Shigella sonnei (strain Ss046).